A 140-amino-acid chain; its full sequence is MYTIEQIKEVIPHRYPFLLVDRILEVEEGKRAVGIKNVTANEEFFNGHFPDYNVMPGVLIVEALAQVGAFAVLKMEQNQGKLAFFAGIENCRFKRQVVPGDQLRLEVELTKLRGPIGKGRATATVDGEVACTAELTFAIK.

His-48 is a catalytic residue.

It belongs to the thioester dehydratase family. FabZ subfamily.

The protein localises to the cytoplasm. The catalysed reaction is a (3R)-hydroxyacyl-[ACP] = a (2E)-enoyl-[ACP] + H2O. In terms of biological role, involved in unsaturated fatty acids biosynthesis. Catalyzes the dehydration of short chain beta-hydroxyacyl-ACPs and long chain saturated and unsaturated beta-hydroxyacyl-ACPs. This is 3-hydroxyacyl-[acyl-carrier-protein] dehydratase FabZ from Exiguobacterium sibiricum (strain DSM 17290 / CCUG 55495 / CIP 109462 / JCM 13490 / 255-15).